The chain runs to 250 residues: MDKLFSMIEVEVNSQCNRTCWYCPNSVSKRKETGEMDPALYKTLMEQLSSLDFAGRISFHFYGEPLLCKNLDLFVGMTTEYIPRARPIIYTNGDFLTEKRLQTLTELGIQKFIVTQHAGAKHKFRGVYDQLAGADKEKVVYLDHSDLVLSNRGGILDNIPQASKANMSCMVPSNLAVVTVLGNVLPCFEDFNQKMVMGNIGEQHISDIWHNDKFTSFRKMLKEGHRGKSDLCKNCNNVSVQTEEQYDYVL.

[4Fe-4S] cluster contacts are provided by C16, C20, C23, C169, C187, and E223.

This sequence belongs to the radical SAM superfamily. It depends on [4Fe-4S] cluster as a cofactor.

It catalyses the reaction 2-deoxy-scyllo-inosamine + S-adenosyl-L-methionine = 3-amino-2,3-dideoxy-scyllo-inosose + 5'-deoxyadenosine + L-methionine + H(+). The protein operates within antibiotic biosynthesis; butirosin biosynthesis. Its function is as follows. Catalyzes the radical S-adenosyl-L-methionine (SAM)-dependent two-electron oxidation of 2-deoxy-scyllo-inosamine (DOIA) to amino-dideoxy-scyllo-inosose (amino-DOI) in the biosynthetic pathway of butirosin. In Niallia circulans (Bacillus circulans), this protein is S-adenosyl-L-methionine-dependent 2-deoxy-scyllo-inosamine dehydrogenase (btrN).